We begin with the raw amino-acid sequence, 447 residues long: Transcriptional enhancer factor TEF-4 (447 aa).

Disordered regions lie at residues 1–46 (MGEP…GVWS) and 183–218 (TPFT…PPAW). Residues 11 to 20 (DDGSGWTGSE) show a composition bias toward low complexity. Gly residues predominate over residues 25–40 (EGTGGSEGAGGDGGPD). Residues 38–114 (GPDAEGVWSP…QVLARRKSRE (77 aa)) constitute a DNA-binding region (TEA). The transcriptional activation stretch occupies residues 172–447 (WNVPDVKPFS…QHHIYRLVRD (276 aa)). Residues 183 to 206 (TPFTLSLTPPSTDLPGYEPPQALS) show a composition bias toward low complexity. Positions 207–216 (PLPPPTPSPP) are enriched in pro residues.

Interacts with YAP1 and WWTR1/TAZ.

It is found in the nucleus. Transcription factor which plays a key role in the Hippo signaling pathway, a pathway involved in organ size control and tumor suppression by restricting proliferation and promoting apoptosis. The core of this pathway is composed of a kinase cascade wherein MST1/MST2, in complex with its regulatory protein SAV1, phosphorylates and activates LATS1/2 in complex with its regulatory protein MOB1, which in turn phosphorylates and inactivates YAP1 oncoprotein and WWTR1/TAZ. Acts by mediating gene expression of YAP1 and WWTR1/TAZ, thereby regulating cell proliferation, migration and epithelial mesenchymal transition (EMT) induction. Binds to the SPH and GT-IIC 'enhansons' (5'-GTGGAATGT-3'). May be involved in the gene regulation of neural development. Binds to the M-CAT motif. In Homo sapiens (Human), this protein is Transcriptional enhancer factor TEF-4 (TEAD2).